An 843-amino-acid chain; its full sequence is Protein P (843 aa).

The terminal protein domain (TP) stretch occupies residues 1 to 177 (MPLSYQHFRR…FCGSPYSWEQ (177 aa)). The segment at 178-346 (ELQHGSTSLN…YCLSHIINLL (169 aa)) is spacer. 2 disordered regions span residues 180 to 202 (QHGSTSLNGEKGHGTEPFCAQSS) and 226 to 315 (QHKQ…VGSE). A compositionally biased stretch (basic residues) spans 239–249 (RSGRLRSRVHT). 2 stretches are compositionally biased toward polar residues: residues 262 to 277 (TGHSDNLATRSTSCFH) and 287 to 299 (PSLSTSKGHTSTG). The segment at 347–690 (EDWGPCYEHG…YMNLYPVARQ (344 aa)) is polymerase/reverse transcriptase domain (RT). One can recognise a Reverse transcriptase domain in the interval 357–600 (EHHIRTPKTP…YSLHFMGYII (244 aa)). 3 residues coordinate Mg(2+): D429, D551, and D552.

It belongs to the hepadnaviridae P protein family.

It carries out the reaction DNA(n) + a 2'-deoxyribonucleoside 5'-triphosphate = DNA(n+1) + diphosphate. The enzyme catalyses Endonucleolytic cleavage to 5'-phosphomonoester.. Activated by host HSP70 and HSP40 in vitro to be able to bind the epsilon loop of the pgRNA. Because deletion of the RNase H region renders the protein partly chaperone-independent, the chaperones may be needed indirectly to relieve occlusion of the RNA-binding site by this domain. Inhibited by several reverse-transcriptase inhibitors: Lamivudine, Adefovir and Entecavir. Multifunctional enzyme that converts the viral RNA genome into dsDNA in viral cytoplasmic capsids. This enzyme displays a DNA polymerase activity that can copy either DNA or RNA templates, and a ribonuclease H (RNase H) activity that cleaves the RNA strand of RNA-DNA heteroduplexes in a partially processive 3'- to 5'-endonucleasic mode. Neo-synthesized pregenomic RNA (pgRNA) are encapsidated together with the P protein, and reverse-transcribed inside the nucleocapsid. Initiation of reverse-transcription occurs first by binding the epsilon loop on the pgRNA genome, and is initiated by protein priming, thereby the 5'-end of (-)DNA is covalently linked to P protein. Partial (+)DNA is synthesized from the (-)DNA template and generates the relaxed circular DNA (RC-DNA) genome. After budding and infection, the RC-DNA migrates in the nucleus, and is converted into a plasmid-like covalently closed circular DNA (cccDNA). The activity of P protein does not seem to be necessary for cccDNA generation, and is presumably released from (+)DNA by host nuclear DNA repair machinery. This is Protein P from Hepatitis B virus genotype H (isolate United States/LAS2523/2002) (HBV-H).